The chain runs to 160 residues: SsrA-binding protein (160 aa).

Residues 131–160 (KKEYDKRDTERERDAGRELQRAVRNKGKED) are disordered.

The protein belongs to the SmpB family.

The protein localises to the cytoplasm. In terms of biological role, required for rescue of stalled ribosomes mediated by trans-translation. Binds to transfer-messenger RNA (tmRNA), required for stable association of tmRNA with ribosomes. tmRNA and SmpB together mimic tRNA shape, replacing the anticodon stem-loop with SmpB. tmRNA is encoded by the ssrA gene; the 2 termini fold to resemble tRNA(Ala) and it encodes a 'tag peptide', a short internal open reading frame. During trans-translation Ala-aminoacylated tmRNA acts like a tRNA, entering the A-site of stalled ribosomes, displacing the stalled mRNA. The ribosome then switches to translate the ORF on the tmRNA; the nascent peptide is terminated with the 'tag peptide' encoded by the tmRNA and targeted for degradation. The ribosome is freed to recommence translation, which seems to be the essential function of trans-translation. The sequence is that of SsrA-binding protein from Pseudomonas fluorescens (strain Pf0-1).